The primary structure comprises 516 residues: MSPIYTTLTLHLATALFLFFHVQKLVHYLHGKATGHRCRRLPPGPTGWPILGALPLLGNMPHVTFANMAKKYGSVMYLKVGSHGLAIASTPDAAKAFLKTLDLNFSNRPPNAGATHLAYNAQDMVFAHYGPKWKLLRKLSNLHMLGGKALENWADVRKTELGYMLKAMFESSQNNEPVMISEMLTYAMANMLSQVILSRRVFNKKGAKSNEFKDMVVELMTSAGYFNIGDFIPSIGWMDLQGIEGGMKRLHKKFDVLLTRLLDDHKRTSQERKQKPDFLDFVIANGDNSDGERLNTDNIKALLLNLFTAGTDTSSSIIEWALAELLKNRTLLTRAQDEMDRVIGRDRRLLESDIPNLPYLQAICKETFRKHPSTPLNLPRNCIRGHVDVNGYYIPKGTRLNVNIWAIGRDPSVWGDNPNEFDPERFLYGRNAKIDPRGNHFELIPFGAGRRICAGTRMGILLVEYILGTLVHSFDWKLGFSEDELNMDETFGLALQKAVPLAAMVIPRLPLHVYAP.

Residue Cys453 coordinates heme.

This sequence belongs to the cytochrome P450 family. Heme serves as cofactor.

The catalysed reaction is a 3',5'-unsubstituted flavanone + 2 reduced [NADPH--hemoprotein reductase] + 2 O2 = a 3',5'-dihydroxyflavanone + 2 oxidized [NADPH--hemoprotein reductase] + 2 H2O + 2 H(+). Its pathway is pigment biosynthesis; anthocyanin biosynthesis. Functionally, catalyzes the 3'5'-hydroxylation of naringenin and eriodictyol to form 5,7,3,'4',5'-pentahydroxyflavanone and 3',5'-hydroxylation of dihydrokaempferol and dihydroquercetin to form dihydromyricetin. The protein is Flavonoid 3',5'-hydroxylase (CYP75A4) of Gentiana triflora (Clustered gentian).